Consider the following 604-residue polypeptide: Threonine--tRNA ligase (604 aa).

A catalytic region spans residues Asp-197–Pro-499. 3 residues coordinate Zn(2+): Cys-296, His-347, and His-476.

Belongs to the class-II aminoacyl-tRNA synthetase family. As to quaternary structure, homodimer. It depends on Zn(2+) as a cofactor.

The protein resides in the cytoplasm. It catalyses the reaction tRNA(Thr) + L-threonine + ATP = L-threonyl-tRNA(Thr) + AMP + diphosphate + H(+). In terms of biological role, catalyzes the attachment of threonine to tRNA(Thr) in a two-step reaction: L-threonine is first activated by ATP to form Thr-AMP and then transferred to the acceptor end of tRNA(Thr). Also edits incorrectly charged L-seryl-tRNA(Thr). The sequence is that of Threonine--tRNA ligase from Synechococcus elongatus (strain ATCC 33912 / PCC 7942 / FACHB-805) (Anacystis nidulans R2).